The following is a 132-amino-acid chain: Snaclec bothroinsularin subunit alpha (132 aa).

3 cysteine pairs are disulfide-bonded: Cys2/Cys13, Cys30/Cys127, and Cys102/Cys119. Residues 9–128 enclose the C-type lectin domain; it reads YGQYCYKFFQ…CGQQNPFVCK (120 aa).

This sequence belongs to the snaclec family. As to quaternary structure, heterodimer of subunits alpha and beta; disulfide-linked. Expressed by the venom gland.

The protein localises to the secreted. Thrombin and prothrombin (F2) inhibitor. The IC(50) of thrombin-induced platelet aggregation and fibrinocoagulation is 62 and 35 nM, respectively. Its inhibitory activity is at least 10-fold lower than that observed for other thrombin inhibitors. The polypeptide is Snaclec bothroinsularin subunit alpha (Bothrops insularis (Golden lancehead)).